Here is a 323-residue protein sequence, read N- to C-terminus: MMRHLLSAGDLTRDDALLILDTAAELARLADRPIKKLPTLRGRTIVNLFYEDSTRTRTSFEAAAKRLSADVINFSAKGSSVSKGESLKDTALTLEAMGTDAVVIRHWASGAPHRLAGWVRGSVINAGDGTHEHPTQALLDAYTIRRHLGGVDGRRVAIVGDILHSRVARSNVTLLHTLGAEVTLVAPPTLLPVGVESWPCAVSYELDGVLPKCDAVMLLRVQRERMQAAFFPTSREYSRRYGLDAARLALLPEHAIVLHPGPMNRGVEIAAEVADSPRSVVVEQVANGVVVRMAVLYLLLGGGEPALAGRAAEPAAAAIGGGW.

Positions 55 and 56 each coordinate carbamoyl phosphate. Lysine 83 lines the L-aspartate pocket. Carbamoyl phosphate is bound by residues arginine 105, histidine 133, and glutamine 136. L-aspartate-binding residues include arginine 166 and arginine 220. Carbamoyl phosphate contacts are provided by glycine 261 and proline 262.

This sequence belongs to the aspartate/ornithine carbamoyltransferase superfamily. ATCase family. In terms of assembly, heterododecamer (2C3:3R2) of six catalytic PyrB chains organized as two trimers (C3), and six regulatory PyrI chains organized as three dimers (R2).

The catalysed reaction is carbamoyl phosphate + L-aspartate = N-carbamoyl-L-aspartate + phosphate + H(+). It participates in pyrimidine metabolism; UMP biosynthesis via de novo pathway; (S)-dihydroorotate from bicarbonate: step 2/3. Functionally, catalyzes the condensation of carbamoyl phosphate and aspartate to form carbamoyl aspartate and inorganic phosphate, the committed step in the de novo pyrimidine nucleotide biosynthesis pathway. The sequence is that of Aspartate carbamoyltransferase catalytic subunit from Acidothermus cellulolyticus (strain ATCC 43068 / DSM 8971 / 11B).